A 188-amino-acid chain; its full sequence is ATP synthase subunit p18, mitochondrial (188 aa).

The transit peptide at 1 to 18 (MMRRVYSPVFCSVAAARF) directs the protein to the mitochondrion. 3 PPR repeats span residues 36-70 (TNTA…PPDI), 75-109 (ATLQ…EMQH), and 116-146 (NEES…METE).

F-type ATPases have 2 components, F(1) - the catalytic core - and F(o) - the membrane proton channel. F(1) has five subunits: alpha(3), beta(3), gamma(1), delta(1), epsilon(1), plus the additional subunit P18 (Tb427.05.1710) that is not present in F(1)F(o) ATP synthase from metazoa. Subunit P18 (Tb927.5.1710) interacts with the alpha subunit with a 1:1 stoichiometry; the interaction is direct. Subunit gamma is part of the central stalk. F(o) has three main subunits: a, b and c. The trypanosomal ATPase complex contains additional subunits that are not present in the F(1)F(o) ATP synthase from metazoa.

The protein resides in the mitochondrion. Its subcellular location is the mitochondrion inner membrane. Functionally, mitochondrial membrane ATP synthase (F(1)F(o) ATP synthase) produces ATP from ADP in the presence of a proton gradient across the membrane which is generated by electron transport complexes of the respiratory chain. F-type ATPases consist of two structural domains, F(1) - containing the extramembraneous catalytic core, and F(o) - containing the membrane proton channel, linked together by a central stalk and a peripheral stalk. During catalysis, ATP synthesis in the catalytic domain of F(1) is coupled via a rotary mechanism of the central stalk subunits to proton translocation. Subunits alpha and beta form the catalytic core in F(1). Rotation of the central stalk against the surrounding alpha(3)beta(3) subunits leads to hydrolysis of ATP in three separate catalytic sites on the beta subunits. Contrary to the procyclic, insect form that requires F(1)F(o) ATP synthase for ATP synthesis, the bloodstream form relies on ATP hydrolysis by F(1)F(o) ATP synthase to maintain its mitochondrial membrane potential. The chain is ATP synthase subunit p18, mitochondrial from Trypanosoma brucei brucei.